Reading from the N-terminus, the 343-residue chain is NADH-quinone oxidoreductase subunit H (343 aa).

Helical transmembrane passes span 19–39 (VAWT…GVAY), 89–109 (ALFI…WAVI), 124–144 (LLYV…AGWA), 158–178 (AAQI…VLMA), 198–218 (WYLW…VAET), 257–277 (ILVA…PVAF), 279–299 (PDGI…FLWF), and 314–334 (LGWK…GGMM).

This sequence belongs to the complex I subunit 1 family. NDH-1 is composed of 14 different subunits. Subunits NuoA, H, J, K, L, M, N constitute the membrane sector of the complex.

It localises to the cell inner membrane. It catalyses the reaction a quinone + NADH + 5 H(+)(in) = a quinol + NAD(+) + 4 H(+)(out). In terms of biological role, NDH-1 shuttles electrons from NADH, via FMN and iron-sulfur (Fe-S) centers, to quinones in the respiratory chain. The immediate electron acceptor for the enzyme in this species is believed to be ubiquinone. Couples the redox reaction to proton translocation (for every two electrons transferred, four hydrogen ions are translocated across the cytoplasmic membrane), and thus conserves the redox energy in a proton gradient. This subunit may bind ubiquinone. The sequence is that of NADH-quinone oxidoreductase subunit H from Thiobacillus denitrificans (strain ATCC 25259 / T1).